The primary structure comprises 435 residues: Probable exopolygalacturonase X (435 aa).

Positions 1–22 (MRLTHVLSHTLGLLALGATAEA) are cleaved as a signal peptide. Positions 31-55 (CSPKKPFRPLPTSSSRDKTCHVRSH) are disordered. A compositionally biased stretch (basic and acidic residues) spans 45–55 (SRDKTCHVRSH). N-linked (GlcNAc...) asparagine glycosylation is found at Asn93, Asn112, Asn128, and Asn198. PbH1 repeat units follow at residues 199–229 (SSNVLFDGIDISGYSKSDNEAKNTDGWDTYR) and 230–251 (SNNIVIQNSVINNGDDCVSFKP). Residue Asp244 is the Proton donor of the active site. The cysteines at positions 246 and 263 are disulfide-linked. N-linked (GlcNAc...) asparagine glycosylation is found at Asn252 and Asn264. A PbH1 3 repeat occupies 253–273 (STNILVQNLHCNGSHGISVGS). His267 is a catalytic residue. N-linked (GlcNAc...) asparagine glycans are attached at residues Asn291, Asn296, Asn328, and Asn353. Residues 326-347 (VKNITYDTALIDNVDWAIEITQ) form a PbH1 4 repeat. The PbH1 5 repeat unit spans residues 361 to 409 (PSSLTISDVHIKNFRGTTSGSEDPYVGTIVCSSPDTCSDIYTSNINVTS). Cys391 and Cys397 form a disulfide bridge. 2 N-linked (GlcNAc...) asparagine glycosylation sites follow: Asn406 and Asn429.

It belongs to the glycosyl hydrolase 28 family.

The protein resides in the secreted. The catalysed reaction is [(1-&gt;4)-alpha-D-galacturonosyl](n) + H2O = alpha-D-galacturonate + [(1-&gt;4)-alpha-D-galacturonosyl](n-1). In terms of biological role, specific in hydrolyzing the terminal glycosidic bond of polygalacturonic acid and oligogalacturonates. The sequence is that of Probable exopolygalacturonase X (pgaX) from Aspergillus niger (strain ATCC MYA-4892 / CBS 513.88 / FGSC A1513).